The following is a 291-amino-acid chain: Transcription initiation factor IIE subunit beta (291 aa).

Position 1 is an N-acetylmethionine (methionine 1). A compositionally biased stretch (basic and acidic residues) spans 1–13 (MDPSLLRERELFK). The interval 1-63 (MDPSLLRERE…NSDHSNGSFN (63 aa)) is disordered. Positions 50–62 (GSKQNSDHSNGSF) are enriched in polar residues. A Phosphoserine modification is found at serine 61. A DNA-binding region (TFIIE beta) is located at residues 66 to 146 (ALSGSSGYKF…YAFKPKYNVR (81 aa)). An N6-acetyllysine modification is found at lysine 74. Residues 243-272 (SSMQESGPKKVAPIQRRKKPASQKKRRFKT) form a disordered region. Positions 257-271 (QRRKKPASQKKRRFK) are enriched in basic residues.

This sequence belongs to the TFIIE beta subunit family. Tetramer of two alpha and two beta chains. Interacts with FACT subunit SUPT16H. Interacts with ATF7IP. Interacts with SND1. Part of TBP-based Pol II pre-initiation complex (PIC), in which Pol II core assembles with general transcription factors and other specific initiation factors including GTF2E1, GTF2E2, GTF2F1, GTF2F2, TCEA1, ERCC2, ERCC3, GTF2H2, GTF2H3, GTF2H4, GTF2H5, GTF2A1, GTF2A2, GTF2B and TBP; this large multi-subunit PIC complex mediates DNA unwinding and targets Pol II core to the transcription start site where the first phosphodiester bond forms.

It localises to the nucleus. Functionally, recruits TFIIH to the initiation complex and stimulates the RNA polymerase II C-terminal domain kinase and DNA-dependent ATPase activities of TFIIH. Both TFIIH and TFIIE are required for promoter clearance by RNA polymerase. The chain is Transcription initiation factor IIE subunit beta (GTF2E2) from Homo sapiens (Human).